Reading from the N-terminus, the 379-residue chain is Chaperone protein DnaJ (379 aa).

The J domain occupies 5 to 70; it reads DYYEILGVPK…QKRAAYDQYG (66 aa). The segment at 134 to 212 adopts a CR-type zinc-finger fold; the sequence is GVTKEIRIPT…CHGHGRIEKT (79 aa). Residues C147, C150, C164, C167, C186, C189, C200, and C203 each coordinate Zn(2+). 4 CXXCXGXG motif repeats span residues 147–154, 164–171, 186–193, and 200–207; these read CEVCHGSG, CPTCHGAG, CPHCQGRG, and CNSCHGHG.

It belongs to the DnaJ family. In terms of assembly, homodimer. Zn(2+) is required as a cofactor.

It localises to the cytoplasm. Participates actively in the response to hyperosmotic and heat shock by preventing the aggregation of stress-denatured proteins and by disaggregating proteins, also in an autonomous, DnaK-independent fashion. Unfolded proteins bind initially to DnaJ; upon interaction with the DnaJ-bound protein, DnaK hydrolyzes its bound ATP, resulting in the formation of a stable complex. GrpE releases ADP from DnaK; ATP binding to DnaK triggers the release of the substrate protein, thus completing the reaction cycle. Several rounds of ATP-dependent interactions between DnaJ, DnaK and GrpE are required for fully efficient folding. Also involved, together with DnaK and GrpE, in the DNA replication of plasmids through activation of initiation proteins. The polypeptide is Chaperone protein DnaJ (Cronobacter sakazakii (strain ATCC BAA-894) (Enterobacter sakazakii)).